A 120-amino-acid polypeptide reads, in one-letter code: Large ribosomal subunit protein bL19 (120 aa).

It belongs to the bacterial ribosomal protein bL19 family.

Functionally, this protein is located at the 30S-50S ribosomal subunit interface and may play a role in the structure and function of the aminoacyl-tRNA binding site. The chain is Large ribosomal subunit protein bL19 from Thermodesulfovibrio yellowstonii (strain ATCC 51303 / DSM 11347 / YP87).